The chain runs to 453 residues: Magnesium transporter MgtE (453 aa).

Topologically, residues 1–286 (MNEGQEMEEQ…ENPLKAASKR (286 aa)) are cytoplasmic. Mg(2+) is bound by residues E71, D98, D102, E136, A140, Y176, R227, D230, A233, D251, and E259. 2 consecutive CBS domains span residues 142 to 205 (MTTE…IADI) and 206 to 262 (LNER…EAAS). A helical transmembrane segment spans residues 287–307 (LPWLITLLFLGMSTASLISNY). Position 308 (E308) is a topological domain, extracellular. A helical membrane pass occupies residues 309–329 (SLVSEASILAVFISLITGTAG). At 330 to 360 (NAGTQSLAVAVRRLAMKDEKDSNFGRLILSE) the chain is on the cytoplasmic side. Residues 361-381 (VLTGLVTGAVTGLTIMIVVGV) form a helical membrane-spanning segment. The Extracellular portion of the chain corresponds to 382–389 (WQHNLPLG). The chain crosses the membrane as a helical span at residues 390 to 410 (FVIGMAMLCAITVANLAGSLI). Residues 411–427 (PMLMDKLGFDPAVASGP) lie on the Cytoplasmic side of the membrane. The chain crosses the membrane as a helical span at residues 428-448 (FITTLSDLTSVLIYFNIASMF). D434 provides a ligand contact to Mg(2+). At 449 to 453 (MRYFV) the chain is on the extracellular side.

It belongs to the SLC41A transporter family. Homodimer.

Its subcellular location is the cell membrane. It carries out the reaction Mg(2+)(in) = Mg(2+)(out). Its function is as follows. Acts as a magnesium transporter. In Enterococcus faecalis (strain ATCC 700802 / V583), this protein is Magnesium transporter MgtE.